The sequence spans 552 residues: 2-methyl-1,2-propanediol dehydrogenase (552 aa).

Belongs to the GMC oxidoreductase family. The cofactor is FAD.

The protein localises to the cytoplasm. It catalyses the reaction 2-methylpropane-1,2-diol + NAD(+) = 2-hydroxy-2-methylpropanal + NADH + H(+). Its function is as follows. Involved in the degradation of methyl tert-butyl ether (MTBE). Catalyzes the conversion of 2-methyl 1,2-propanediol (2-M1,2-PD) to hydroxyisobutyraldehyde. The polypeptide is 2-methyl-1,2-propanediol dehydrogenase (Mycolicibacterium austroafricanum (Mycobacterium austroafricanum)).